The chain runs to 190 residues: dCTP deaminase (190 aa).

Residues 111–116 (KSTYAR), 135–137 (TLE), Q156, Y172, and Q182 each bind dCTP. The active-site Proton donor/acceptor is the E137.

This sequence belongs to the dCTP deaminase family. In terms of assembly, homotrimer.

It carries out the reaction dCTP + H2O + H(+) = dUTP + NH4(+). The protein operates within pyrimidine metabolism; dUMP biosynthesis; dUMP from dCTP (dUTP route): step 1/2. Catalyzes the deamination of dCTP to dUTP. The protein is dCTP deaminase of Stenotrophomonas maltophilia (strain R551-3).